The following is a 741-amino-acid chain: NAD(P)H-quinone oxidoreductase subunit 5, chloroplastic (741 aa).

14 helical membrane-spanning segments follow: residues 9–29 (WIIPFVPLPVTMSIGLGLLLV), 40–60 (WAFPSVSLLSIVMVFSADLSI), 89–109 (IDPLTSIMSILITTVGIMVLI), 122–139 (LRFFAYMSFSNTSMLGLV), 147–167 (IHIFWELVGMCSYLLIGFWFT), 185–205 (GDFGLLLGILGFYWITGSLEF), 219–239 (NGVNSLFATLCAFLLFVGAVA), 258–278 (TPISALIHAATMVAAGIFLVA), 280–300 (LLPIFTVIPYIMNLISLLGII), 396–416 (TTFLLGTLSLCGIPPLACFWS), 425–445 (WLYSPIFAIIACSTAGLTAFY), 544–564 (LFPLLVLVLFTLFVGSIGIPF), 603–623 (IYSVSISYFGIFIASLLYGSV), and 719–739 (YLFVYLSYVSTFLLIYYFYFL).

The protein belongs to the complex I subunit 5 family. NDH is composed of at least 16 different subunits, 5 of which are encoded in the nucleus.

Its subcellular location is the plastid. It localises to the chloroplast thylakoid membrane. It carries out the reaction a plastoquinone + NADH + (n+1) H(+)(in) = a plastoquinol + NAD(+) + n H(+)(out). The catalysed reaction is a plastoquinone + NADPH + (n+1) H(+)(in) = a plastoquinol + NADP(+) + n H(+)(out). NDH shuttles electrons from NAD(P)H:plastoquinone, via FMN and iron-sulfur (Fe-S) centers, to quinones in the photosynthetic chain and possibly in a chloroplast respiratory chain. The immediate electron acceptor for the enzyme in this species is believed to be plastoquinone. Couples the redox reaction to proton translocation, and thus conserves the redox energy in a proton gradient. The polypeptide is NAD(P)H-quinone oxidoreductase subunit 5, chloroplastic (ndhF) (Liriodendron tulipifera (Tuliptree)).